A 65-amino-acid chain; its full sequence is Large ribosomal subunit protein uL29 (65 aa).

It belongs to the universal ribosomal protein uL29 family.

The sequence is that of Large ribosomal subunit protein uL29 from Xylella fastidiosa (strain Temecula1 / ATCC 700964).